A 340-amino-acid polypeptide reads, in one-letter code: Phosphoribosylformylglycinamidine cyclo-ligase (340 aa).

This sequence belongs to the AIR synthase family.

The protein localises to the cytoplasm. The enzyme catalyses 2-formamido-N(1)-(5-O-phospho-beta-D-ribosyl)acetamidine + ATP = 5-amino-1-(5-phospho-beta-D-ribosyl)imidazole + ADP + phosphate + H(+). Its pathway is purine metabolism; IMP biosynthesis via de novo pathway; 5-amino-1-(5-phospho-D-ribosyl)imidazole from N(2)-formyl-N(1)-(5-phospho-D-ribosyl)glycinamide: step 2/2. The chain is Phosphoribosylformylglycinamidine cyclo-ligase from Streptococcus pneumoniae serotype 2 (strain D39 / NCTC 7466).